Here is a 679-residue protein sequence, read N- to C-terminus: Glycine--tRNA ligase beta subunit (679 aa).

This sequence belongs to the class-II aminoacyl-tRNA synthetase family. As to quaternary structure, tetramer of two alpha and two beta subunits.

It localises to the cytoplasm. The catalysed reaction is tRNA(Gly) + glycine + ATP = glycyl-tRNA(Gly) + AMP + diphosphate. This is Glycine--tRNA ligase beta subunit from Streptococcus agalactiae serotype V (strain ATCC BAA-611 / 2603 V/R).